Here is a 135-residue protein sequence, read N- to C-terminus: Transmembrane protein 107 (135 aa).

4 helical membrane-spanning segments follow: residues 7-27 (LVPA…TIFW), 55-75 (VALS…LSGV), 83-103 (ALLS…FVFH), and 110-130 (YWII…FLLL).

The protein localises to the membrane. In terms of biological role, may play a role in cilia formation and embryonic patterning. This chain is Transmembrane protein 107 (tmem107), found in Danio rerio (Zebrafish).